A 382-amino-acid chain; its full sequence is Lipid-A-disaccharide synthase (382 aa).

Belongs to the LpxB family.

The enzyme catalyses 2-N,3-O-bis[(3R)-3-hydroxytetradecanoyl]-alpha-D-glucosaminyl 1-phosphate + UDP-2-N,3-O-bis[(3R)-3-hydroxytetradecanoyl]-alpha-D-glucosamine = lipid A disaccharide (E. coli) + UDP + H(+). It catalyses the reaction a lipid X + a UDP-2-N,3-O-bis[(3R)-3-hydroxyacyl]-alpha-D-glucosamine = a lipid A disaccharide + UDP + H(+). It participates in glycolipid biosynthesis; lipid IV(A) biosynthesis; lipid IV(A) from (3R)-3-hydroxytetradecanoyl-[acyl-carrier-protein] and UDP-N-acetyl-alpha-D-glucosamine: step 5/6. Functionally, condensation of UDP-2,3-diacylglucosamine and 2,3-diacylglucosamine-1-phosphate to form lipid A disaccharide, a precursor of lipid A, a phosphorylated glycolipid that anchors the lipopolysaccharide to the outer membrane of the cell. This Sodalis glossinidius (strain morsitans) protein is Lipid-A-disaccharide synthase.